The following is a 320-amino-acid chain: Cytochrome f (320 aa).

Residues 1-35 (MQTRKTFSWIKEEITRSISVLLMIYIITWASISNA) form the signal peptide. Heme-binding residues include tyrosine 36, cysteine 56, cysteine 59, and histidine 60. The helical transmembrane segment at 286–306 (VQGLLFFLASVILAQIFLVLK) threads the bilayer.

It belongs to the cytochrome f family. In terms of assembly, the 4 large subunits of the cytochrome b6-f complex are cytochrome b6, subunit IV (17 kDa polypeptide, petD), cytochrome f and the Rieske protein, while the 4 small subunits are PetG, PetL, PetM and PetN. The complex functions as a dimer. Heme is required as a cofactor.

Its subcellular location is the plastid. The protein localises to the chloroplast thylakoid membrane. In terms of biological role, component of the cytochrome b6-f complex, which mediates electron transfer between photosystem II (PSII) and photosystem I (PSI), cyclic electron flow around PSI, and state transitions. In Manihot esculenta (Cassava), this protein is Cytochrome f.